The chain runs to 502 residues: DGEQALQASLSVKEKLQIALCLEKAGVDIMEVGFPISSPGDFKSVQTISQNIKNSRICSLARCIEKDIDTAGEAMSHCDFFRIHVFLATSTLHMESKLRKNFDEIIDMAIFSVKRALRYTDDVEFSCEDASRTTMDNLCRIVEKLISCGVKTINIPDTVGYTIPNELSLIIKNLFERVPNIHKSTISVHCHNDLGMAVGNSISAIQAGARQIEGTINGIGERAGNTALEEVIMAIKVREDILGLSTNINHKEIYRTSQVISRICNMPIPSNKAIVGSNAFSHSSGIHQDGVLKNRENYEIMDPSSIGLKKVKLNLTSRSGRAAVKYYMNEMGYKDSDYNIDELYVDFLKLADKKGQVFDYDLEALAFINKKQDELEHFCLKFFSVQSISNNLSTASVTLLCGDKIYTESSTTSNGPVXAIYQALNRITHFPIILQKFQLIAKGQGKDALGQVDILVKYKKRQFHGVGLATDIIESSAQAMINVLNNIWKVKQVNKNLKNLKK.

Mn(2+) is bound by residues aspartate 1, histidine 189, histidine 191, and asparagine 225. In terms of domain architecture, Pyruvate carboxyltransferase spans 1–254 (DGEQALQASL…STNINHKEIY (254 aa)). Residues 379-502 (CLKFFSVQSI…VNKNLKNLKK (124 aa)) are regulatory domain.

Belongs to the alpha-IPM synthase/homocitrate synthase family. LeuA type 1 subfamily. As to quaternary structure, homodimer. Mn(2+) is required as a cofactor.

Its subcellular location is the cytoplasm. The catalysed reaction is 3-methyl-2-oxobutanoate + acetyl-CoA + H2O = (2S)-2-isopropylmalate + CoA + H(+). It participates in amino-acid biosynthesis; L-leucine biosynthesis; L-leucine from 3-methyl-2-oxobutanoate: step 1/4. Functionally, catalyzes the condensation of the acetyl group of acetyl-CoA with 3-methyl-2-oxobutanoate (2-ketoisovalerate) to form 3-carboxy-3-hydroxy-4-methylpentanoate (2-isopropylmalate). This chain is 2-isopropylmalate synthase, found in Buchnera aphidicola subsp. Uroleucon sonchi.